The sequence spans 179 residues: MSTPARRRLMRDFKRMQQDPPSGVSASPLPDNVMKWNAVIIGPSDTPFEDGTFRLLLSFDEQYPNKPPQVKFISEMFHPNVYASGELCLDILQNRWSPTYDVSSILTSVQSLLNDPNISSPANVEAANLYKDHRSLYVKRVRETVENSWNDDDDEEEEEEDEDEAEDEDDDDDDNIDED.

The interval Met1–Pro28 is disordered. In terms of domain architecture, UBC core spans Pro4–Asn150. The active-site Glycyl thioester intermediate is the Cys88. The interval Val145–Asp179 is disordered. Positions Trp149 to Asp179 are enriched in acidic residues. The interval Asp151–Asp179 is acidic tail.

It belongs to the ubiquitin-conjugating enzyme family.

It localises to the cytoplasm. The protein localises to the nucleus. It catalyses the reaction S-ubiquitinyl-[E1 ubiquitin-activating enzyme]-L-cysteine + [E2 ubiquitin-conjugating enzyme]-L-cysteine = [E1 ubiquitin-activating enzyme]-L-cysteine + S-ubiquitinyl-[E2 ubiquitin-conjugating enzyme]-L-cysteine.. The protein operates within protein modification; protein ubiquitination. Functionally, catalyzes the covalent attachment of ubiquitin to other proteins. Plays a role in transcription regulation by catalyzing the monoubiquitination of histone H2B to form H2BK123ub1. H2BK123ub1 gives a specific tag for epigenetic transcriptional activation and is also a prerequisite for H3K4me and H3K79me formation. Also involved in postreplication repair of UV-damaged DNA, in N-end rule-dependent protein degradation and in sporulation. In Candida albicans (strain SC5314 / ATCC MYA-2876) (Yeast), this protein is Ubiquitin-conjugating enzyme E2 2 (UBC2).